Reading from the N-terminus, the 175-residue chain is NADH-ubiquinone oxidoreductase chain 6 (175 aa).

Transmembrane regions (helical) follow at residues 1–21, 25–45, 47–67, 88–108, and 149–169; these read MMTYIVFILSTIFVISFVGFS, SPIYGGVGLIVSGGVGCGIVM, FGGSFLGLMVFLIYLGGMLVV, VVMGAFISGLIVEVVFVLCVL, and YGVWLVIVTGWSLLIGVIVVL.

Belongs to the complex I subunit 6 family.

The protein localises to the mitochondrion membrane. The enzyme catalyses a ubiquinone + NADH + 5 H(+)(in) = a ubiquinol + NAD(+) + 4 H(+)(out). Core subunit of the mitochondrial membrane respiratory chain NADH dehydrogenase (Complex I) that is believed to belong to the minimal assembly required for catalysis. Complex I functions in the transfer of electrons from NADH to the respiratory chain. The immediate electron acceptor for the enzyme is believed to be ubiquinone. In Rhinolophus monoceros (Formosan lesser horseshoe bat), this protein is NADH-ubiquinone oxidoreductase chain 6 (MT-ND6).